The primary structure comprises 276 residues: Pirin-like protein CC_0481 (276 aa).

Belongs to the pirin family.

The polypeptide is Pirin-like protein CC_0481 (Caulobacter vibrioides (strain ATCC 19089 / CIP 103742 / CB 15) (Caulobacter crescentus)).